We begin with the raw amino-acid sequence, 240 residues long: 2,3-bisphosphoglycerate-dependent phosphoglycerate mutase 2 (240 aa).

Residues 8–15 (RHGQSEWN), 21–22 (TG), Arg60, 87–90 (ERHY), Lys98, 114–115 (RR), and 183–184 (GN) contribute to the substrate site. Catalysis depends on His9, which acts as the Tele-phosphohistidine intermediate. Glu87 serves as the catalytic Proton donor/acceptor.

It belongs to the phosphoglycerate mutase family. BPG-dependent PGAM subfamily.

The enzyme catalyses (2R)-2-phosphoglycerate = (2R)-3-phosphoglycerate. The protein operates within carbohydrate degradation; glycolysis; pyruvate from D-glyceraldehyde 3-phosphate: step 3/5. Catalyzes the interconversion of 2-phosphoglycerate and 3-phosphoglycerate. The sequence is that of 2,3-bisphosphoglycerate-dependent phosphoglycerate mutase 2 from Bacillus cereus (strain ATCC 10987 / NRS 248).